The following is a 258-amino-acid chain: Retron Ec83 putative HNH endonuclease (258 aa).

In terms of biological role, putative HNH endonuclease component of antiviral defense system retron Ec83, composed of a non-coding RNA (ncRNA), a reverse transcriptase (RT), a probable ATPase and this protein. Expression of retron Ec78 confers protection against bacteriophage T2, T4 and T6. At multiplicity of infection (MOI) of 0.02 cultures slow growth when infected with T4 but do not collapse, at MOI 2 cultures enter growth stasis. The chain is Retron Ec83 putative HNH endonuclease from Escherichia coli.